Reading from the N-terminus, the 128-residue chain is MIDLYLSPSCTSCRKARAWLQSHKVPFVEHNILTQPMTTNDLRHILTKTENGTEDIISTRSKVFQKLAVDVDNLTINELLDLVTEFPNLLRRPIITDSKHLQIGFNEDEIRAFLPREYRRAEMLSTID.

Cysteines 10 and 13 form a disulfide.

Belongs to the ArsC family. Spx subfamily. As to quaternary structure, interacts with the C-terminal domain of the alpha subunit of the RNAP.

The protein resides in the cytoplasm. Functionally, global transcriptional regulator that plays a key role in stress response and exerts either positive or negative regulation of genes. Acts by interacting with the C-terminal domain of the alpha subunit of the RNA polymerase (RNAP). This interaction can enhance binding of RNAP to the promoter region of target genes and stimulate their transcription, or block interaction of RNAP with activator. The sequence is that of Global transcriptional regulator Spx 1 from Lactococcus lactis subsp. lactis (strain IL1403) (Streptococcus lactis).